A 375-amino-acid polypeptide reads, in one-letter code: Alcohol dehydrogenase 1A (375 aa).

An N-acetylserine modification is found at Ser-2. Ser-23 is modified (phosphoserine). Phosphotyrosine is present on Tyr-35. Cys-47 serves as a coordination point for Zn(2+). An NAD(+)-binding site is contributed by 48 to 52 (GTDDH). Zn(2+)-binding residues include His-68, Cys-98, Cys-101, Cys-104, Cys-112, and Cys-175. Residues 200-205 (GLGGVG), Asp-224, Lys-229, Ile-270, 293-295 (VGV), 318-320 (AVY), and Arg-370 contribute to the NAD(+) site.

It belongs to the zinc-containing alcohol dehydrogenase family. As to quaternary structure, dimer of identical or heterodimer of closely related subunits alpha, beta, or gamma that are encoded by genes ADH1A, ADH1B, and ADH1C, respectively. Zn(2+) is required as a cofactor.

It is found in the cytoplasm. The enzyme catalyses a primary alcohol + NAD(+) = an aldehyde + NADH + H(+). The catalysed reaction is a secondary alcohol + NAD(+) = a ketone + NADH + H(+). It carries out the reaction butan-1-ol + NAD(+) = butanal + NADH + H(+). It catalyses the reaction 1-propanol + NAD(+) = propanal + NADH + H(+). The enzyme catalyses propan-2-ol + NAD(+) = acetone + NADH + H(+). Alcohol dehydrogenase. Oxidizes primary as well as secondary alcohols. Ethanol is a very poor substrate. The polypeptide is Alcohol dehydrogenase 1A (ADH1A) (Macaca mulatta (Rhesus macaque)).